Consider the following 340-residue polypeptide: uncharacterized protein (340 aa).

An N-terminal signal peptide occupies residues 1–23 (MQKKVLSLVLVLAVLESIVPVSA).

This is an uncharacterized protein from Archaeoglobus fulgidus (strain ATCC 49558 / DSM 4304 / JCM 9628 / NBRC 100126 / VC-16).